The chain runs to 196 residues: MAGNKKTNRREEILQALAQMLESTQGSQRITTAKLAAQVGVSEAALYRHFPSKARMFEGLIEFIEDSISTRINRILDDEKDTMNRLRMVLQLILVFAERNPGLTRIMTGHALMFEQDRLQSRINQLFERIETQLRQVLRERKLREGKGFPVDESVLAAQLLGQVEGSLNRYVRSNFKYKPTENFDHYWQLLSAQLG.

The HTH tetR-type domain occupies 7–68; sequence TNRREEILQA…GLIEFIEDSI (62 aa). Positions 31 to 50 form a DNA-binding region, H-T-H motif; that stretch reads TTAKLAAQVGVSEAALYRHF. Residues 115-142 adopt a coiled-coil conformation; it reads EQDRLQSRINQLFERIETQLRQVLRERK.

It belongs to the nucleoid occlusion factor SlmA family. Homodimer. Interacts with FtsZ.

Its subcellular location is the cytoplasm. It is found in the nucleoid. Required for nucleoid occlusion (NO) phenomenon, which prevents Z-ring formation and cell division over the nucleoid. Acts as a DNA-associated cell division inhibitor that binds simultaneously chromosomal DNA and FtsZ, and disrupts the assembly of FtsZ polymers. SlmA-DNA-binding sequences (SBS) are dispersed on non-Ter regions of the chromosome, preventing FtsZ polymerization at these regions. The chain is Nucleoid occlusion factor SlmA from Photobacterium profundum (strain SS9).